The chain runs to 335 residues: NADH-quinone oxidoreductase subunit H (335 aa).

The next 8 membrane-spanning stretches (helical) occupy residues 12–32 (IIAVVKAIVVLLAVVVCGALL), 81–101 (VIFTLAPVVAMSALLIAFAVI), 114–134 (IGLLFFFAMAGLSVYAVLFAG), 154–174 (VSYEVFMGLALMGIVVQVGSF), 187–207 (LWFIIPQFFGFCTFFIAGVAV), 238–258 (FFVGEYIGIILISALLVTLFF), 270–290 (SLAFFWFALKTAFFIMLFILL), and 307–327 (WKFCLPLTLINLLVTAAIVLL).

It belongs to the complex I subunit 1 family. In terms of assembly, NDH-1 is composed of 13 different subunits. Subunits NuoA, H, J, K, L, M, N constitute the membrane sector of the complex.

The protein resides in the cell inner membrane. It catalyses the reaction a quinone + NADH + 5 H(+)(in) = a quinol + NAD(+) + 4 H(+)(out). Functionally, NDH-1 shuttles electrons from NADH, via FMN and iron-sulfur (Fe-S) centers, to quinones in the respiratory chain. The immediate electron acceptor for the enzyme in this species is believed to be ubiquinone. Couples the redox reaction to proton translocation (for every two electrons transferred, four hydrogen ions are translocated across the cytoplasmic membrane), and thus conserves the redox energy in a proton gradient. This subunit may bind ubiquinone. This chain is NADH-quinone oxidoreductase subunit H, found in Pseudomonas syringae pv. syringae (strain B728a).